The primary structure comprises 420 residues: Transcription factor IIIB 50 kDa subunit (420 aa).

The TFIIB-type zinc finger occupies 3–36 (NGSRCPDCGSSELVEDSHYSQSQLVCSDCGCVVT). Positions 7, 10, 28, and 31 each coordinate Zn(2+). A run of 2 repeats spans residues 72 to 157 (DLRR…MQMV) and 173 to 249 (VKSY…SLAQ). Positions 108 to 114 (AARLQKK) are interaction with target DNA. The tract at residues 316–387 (TAEVETQQQQ…AVTGDEDISD (72 aa)) is disordered. Low complexity predominate over residues 322–336 (QQQQQQQQGQGQGQQ). Phosphoserine is present on serine 354. The required for the formation of a ternary complex with DNA and TBP; not required for interaction with TBP in the absence of DNA stretch occupies residues 358 to 364 (LLPPCML). A Cysteine sulfenic acid (-SOH) modification is found at cysteine 362. The interval 366-420 (PPKRTHTLPPESAVTGDEDISDSEIEQYLRTPQEVRDFERAQAASQAAMRVPNPP) is required for interaction with TBP and formation of a ternary complex with DNA and TBP.

The protein belongs to the TFIIB family. As to quaternary structure, component of TFIIIB complexes. The TFIIIB complex has two activities, alpha and beta. The TFIIIB-alpha activity complex is composed of TBP, BDP1, and a complex containing both BRF2 and at least four stably associated proteins; this complex inhibits the transcription by pol III via its phosphorylation by CK2; YY1 facilitates the TFIIIB-alpha complex formation. Interacts with TBP; this interaction promotes recruitment of BRF2 to TATA box-containing promoters. Interacts with TBP and the BURE sequence (GC-rich sequence downstream from the TATA box) to form a strong ternary complex which is joined by BDP1; this ternary complex stimulates pol III transcription. Forms a trimeric complex composed of TBP, BRF2 and mini-SNAPc complex (SNAP43, SNAP50, and the N-terminal third of SNAP190) on the promoter. Assembly of the TBP-BRF2 complex is stimulated by SNAP190. Interacts with MAF1 and SNAPC4. In response to oxidative stress, Cys-362 is reversibly oxidized to cysteine sulfenic acid. Oxidation of Cys-362 impairs formation of a ternary complex with TBP and DNA and down-regulates expression of target genes in response to oxidative stress.

The protein localises to the nucleus. Its function is as follows. General activator of RNA polymerase III transcription. Factor exclusively required for RNA polymerase III transcription of genes with promoter elements upstream of the initiation sites. Contributes to the regulation of gene expression; functions as activator in the absence of oxidative stress. Down-regulates expression of target genes in response to oxidative stress. Overexpression protects cells against apoptosis in response to oxidative stress. In Mus musculus (Mouse), this protein is Transcription factor IIIB 50 kDa subunit (Brf2).